Reading from the N-terminus, the 433-residue chain is Leucine-rich repeat extensin-like protein 7 (433 aa).

Positions 1-21 (MRIYQPTLLIFTTVVLLSISA) are cleaved as a signal peptide. A glycan (N-linked (GlcNAc...) asparagine) is linked at Asn-71. LRR repeat units lie at residues 98-122 (VKTVSGVDLNQGDIAGHLPEELGLL), 123-145 (TDIALFHVNSNRFCGTLPVGFSQ), 146-170 (LSLLFELDLSNNRFAGKFPEVVIGL), 171-194 (PKLKYLDLRYNEFEGELPESLFDK), 196-217 (LDALFLNSNRFRSKIPVNMGNS), 219-239 (VSVLVLASNRFEGCIPPSFGK), 241-265 (GKTLNEIILMDNGLQSCIPNDMGLL), 266-289 (QNVTVLDISYNWLVGELPKSMGQM), and 290-313 (ENLEVLNVERNMLSGLIPDELCSL). Asn-267 carries an N-linked (GlcNAc...) asparagine glycan. Asn-340 is a glycosylation site (N-linked (GlcNAc...) asparagine). The interval 380 to 433 (FSPPPSQISPSSQPLAPAPSPTSPPLSTPPPARPCPPVYSPPPPPPLSLAPSMN) is disordered. The segment at 381–433 (SPPPSQISPSSQPLAPAPSPTSPPLSTPPPARPCPPVYSPPPPPPLSLAPSMN) is contains the Ser-Pro(4) repeats. Positions 395–427 (APAPSPTSPPLSTPPPARPCPPVYSPPPPPPLS) are enriched in pro residues.

Hydroxylated on proline residues in the S-P-P-P-P repeat. In terms of processing, O-glycosylated on hydroxyprolines. Expressed in flowers and pollen.

It is found in the secreted. It localises to the cell wall. Functionally, modulates cell morphogenesis by regulating cell wall formation and assembly, and/or growth polarization. In Arabidopsis thaliana (Mouse-ear cress), this protein is Leucine-rich repeat extensin-like protein 7 (LRX7).